Here is an 887-residue protein sequence, read N- to C-terminus: 3-hydroxy-3-methylglutaryl-coenzyme A reductase (887 aa).

Over 1–9 (MLSRLFRMH) the chain is Cytoplasmic. The chain crosses the membrane as a helical span at residues 10–39 (GLFVASHPWEVIVGTVTLTICMMSMNMFTG). The Lumenal portion of the chain corresponds to 40–56 (NNKICGWNYECPKFEED). Residues 57-78 (VLSSDIIILTITRCIAILYIYF) form a helical membrane-spanning segment. The SSD domain maps to 61–218 (DIIILTITRC…MTFFPACVSL (158 aa)). The INSIG-binding motif motif lies at 75-78 (YIYF). At 79–89 (QFQNLRQLGSK) the chain is on the cytoplasmic side. Lysine 89 is covalently cross-linked (Glycyl lysine isopeptide (Lys-Gly) (interchain with G-Cter in ubiquitin)). The chain crosses the membrane as a helical span at residues 90–114 (YILGIAGLFTIFSSFVFSTVVIHFL). At 115-123 (DKELTGLNE) the chain is on the lumenal side. The chain crosses the membrane as a helical span at residues 124 to 149 (ALPFFLLLIDLSRASALAKFALSSNS). Residues 150 to 159 (QDEVRENIAR) are Cytoplasmic-facing. The helical transmembrane segment at 160 to 187 (GMAILGPTFTLDALVECLVIGVGTMSGV) threads the bilayer. The Lumenal segment spans residues 188–191 (RQLE). A helical transmembrane segment spans residues 192 to 220 (IMCCFGCMSVLANYFVFMTFFPACVSLVL). Topologically, residues 221–248 (ELSRESREGRPIWQLSHFARVLEEEENK) are cytoplasmic. Lysine 248 participates in a covalent cross-link: Glycyl lysine isopeptide (Lys-Gly) (interchain with G-Cter in ubiquitin). The chain crosses the membrane as a helical span at residues 249 to 275 (PNPVTQRVKMIMSLGLVLVHAHSRWIA). Residues 276 to 314 (DPSPQNSTAEQAKVSLGLDEDVSKRIEPSVSLWQFYLSK) lie on the Lumenal side of the membrane. The N-linked (GlcNAc...) asparagine glycan is linked to asparagine 281. The helical transmembrane segment at 315 to 339 (MISMDIEQVITLSLAFLLAVKYIFF) threads the bilayer. The Cytoplasmic segment spans residues 340-887 (EQAETESTLS…LQGTCTKKAA (548 aa)). Active-site charge relay system residues include glutamate 558, lysine 690, and aspartate 766. Histidine 865 (proton donor) is an active-site residue. Residue serine 871 is modified to Phosphoserine.

This sequence belongs to the HMG-CoA reductase family. In terms of assembly, homotetramer. Homodimer. Interacts (via its SSD) with INSIG1; the interaction, accelerated by sterols, leads to the recruitment of HMGCR to AMFR/gp78 for its ubiquitination by the sterol-mediated ERAD pathway. Interacts with UBIAD1. Post-translationally, undergoes sterol-mediated ubiquitination and ER-associated degradation (ERAD). Accumulation of sterols in the endoplasmic reticulum (ER) membrane, triggers binding of the reductase to the ER membrane protein INSIG1 or INSIG2. The INSIG1 binding leads to the recruitment of the ubiquitin ligase, AMFR/gp78, RNF139 or RNF145, initiating ubiquitination of the reductase. The ubiquitinated reductase is then extracted from the ER membrane and delivered to cytosolic 26S proteosomes by a mechanism probably mediated by the ATPase Valosin-containing protein VCP/p97. The INSIG2-binding leads to the recruitment of the ubiquitin ligase RNF139, initiating ubiquitination of the reductase. Lys-248 is the main site of ubiquitination. Ubiquitination is enhanced by the presence of a geranylgeranylated protein. N-glycosylated. Deglycosylated by NGLY1 on release from the endoplasmic reticulum (ER) in a sterol-mediated manner. In terms of processing, phosphorylated. Phosphorylation at Ser-871 reduces the catalytic activity.

The protein resides in the endoplasmic reticulum membrane. The protein localises to the peroxisome membrane. The catalysed reaction is (R)-mevalonate + 2 NADP(+) + CoA = (3S)-3-hydroxy-3-methylglutaryl-CoA + 2 NADPH + 2 H(+). It participates in metabolic intermediate biosynthesis; (R)-mevalonate biosynthesis; (R)-mevalonate from acetyl-CoA: step 3/3. With respect to regulation, regulated by a negative feedback mechanism through sterols and non-sterol metabolites derived from mevalonate. Phosphorylation at Ser-871 down-regulates the catalytic activity. Its function is as follows. Catalyzes the conversion of (3S)-hydroxy-3-methylglutaryl-CoA (HMG-CoA) to mevalonic acid, the rate-limiting step in the synthesis of cholesterol and other isoprenoids, thus plays a critical role in cellular cholesterol homeostasis. The chain is 3-hydroxy-3-methylglutaryl-coenzyme A reductase (Hmgcr) from Mus musculus (Mouse).